Consider the following 196-residue polypeptide: uncharacterized protein (196 aa).

Residues 12-66 (LRAAREAQKMSQRELSARSGLTQSHISQIERGTMEPGLGSLVDVARALDLEIVLA) form the HTH cro/C1-type domain. The segment at residues 23-42 (QRELSARSGLTQSHISQIER) is a DNA-binding region (H-T-H motif). Residues 174–196 (VHRDRDDAVPRSAYALDEEDDNA) form a disordered region.

This is an uncharacterized protein from Sinorhizobium fredii (strain NBRC 101917 / NGR234).